The primary structure comprises 132 residues: MARILNIEIPSNKRVVISLTYILGIGKSLSKEIIVKANEKLAKAKEKTFTEDSRVKDLSEEQLQAIRDSAKTYLTEGDLRREVSLNIKRLMEIKCYRGIRHRKGLPVRGQVTQKNARTRKGPRKTVAGKKGK.

The disordered stretch occupies residues 106 to 132; it reads PVRGQVTQKNARTRKGPRKTVAGKKGK. The segment covering 116–132 has biased composition (basic residues); it reads ARTRKGPRKTVAGKKGK.

This sequence belongs to the universal ribosomal protein uS13 family. In terms of assembly, part of the 30S ribosomal subunit. Forms a loose heterodimer with protein S19. Forms two bridges to the 50S subunit in the 70S ribosome.

Its function is as follows. Located at the top of the head of the 30S subunit, it contacts several helices of the 16S rRNA. In the 70S ribosome it contacts the 23S rRNA (bridge B1a) and protein L5 of the 50S subunit (bridge B1b), connecting the 2 subunits; these bridges are implicated in subunit movement. Contacts the tRNAs in the A and P-sites. In Mycoplasmopsis pulmonis (strain UAB CTIP) (Mycoplasma pulmonis), this protein is Small ribosomal subunit protein uS13.